A 429-amino-acid chain; its full sequence is MDRIHITGGAPLQGEIPISGAKNAALPLMIASLLTGETVELANVPRLADIASLLRILGNHGVDHMVVGKRPGQTSETGQTIRLTASNVIDTTAPYELVSTMRASFWVVAPLLARFGEAKVSMPGGCAIGTRPVDLLLMALERLGASIEIDGGYVVARTRNGLRGAEIVFPKVTVGGTHVALMAAALAQGTSVIENAAREPEVVDLAACLTKMGARIEGVGTPRIVVEGVSRLGGARHEVLPDRIETGTYAMAVAMTGGDVILRDTRAELLHSALDVLATTGTEVTALPDGIRVRRNGAGVAAVDVTTDPFPGFPTDLQAQFMALMTRARGQSRIRETIFENRFMHVQELARLGARIRLDGDLAVVDGVERLKGAPVMATDLRASVSLVIAGLAAEGETTINRVYHLDRGFEALEAKLGRCGAQIRRERA.

22–23 (KN) lines the phosphoenolpyruvate pocket. A UDP-N-acetyl-alpha-D-glucosamine-binding site is contributed by Arg-102. Cys-126 serves as the catalytic Proton donor. Residue Cys-126 is modified to 2-(S-cysteinyl)pyruvic acid O-phosphothioketal. Residues 131 to 135 (RPVDL), Asp-316, and Ile-338 contribute to the UDP-N-acetyl-alpha-D-glucosamine site.

It belongs to the EPSP synthase family. MurA subfamily.

It is found in the cytoplasm. It carries out the reaction phosphoenolpyruvate + UDP-N-acetyl-alpha-D-glucosamine = UDP-N-acetyl-3-O-(1-carboxyvinyl)-alpha-D-glucosamine + phosphate. It functions in the pathway cell wall biogenesis; peptidoglycan biosynthesis. Cell wall formation. Adds enolpyruvyl to UDP-N-acetylglucosamine. The sequence is that of UDP-N-acetylglucosamine 1-carboxyvinyltransferase from Methylobacterium sp. (strain 4-46).